Here is a 496-residue protein sequence, read N- to C-terminus: Cytosol aminopeptidase (496 aa).

Residues Lys-258 and Asp-263 each contribute to the Mn(2+) site. Lys-270 is an active-site residue. Mn(2+) contacts are provided by Asp-281, Asp-340, and Glu-342. The active site involves Arg-344.

This sequence belongs to the peptidase M17 family. Mn(2+) is required as a cofactor.

The protein localises to the cytoplasm. It catalyses the reaction Release of an N-terminal amino acid, Xaa-|-Yaa-, in which Xaa is preferably Leu, but may be other amino acids including Pro although not Arg or Lys, and Yaa may be Pro. Amino acid amides and methyl esters are also readily hydrolyzed, but rates on arylamides are exceedingly low.. The enzyme catalyses Release of an N-terminal amino acid, preferentially leucine, but not glutamic or aspartic acids.. In terms of biological role, presumably involved in the processing and regular turnover of intracellular proteins. Catalyzes the removal of unsubstituted N-terminal amino acids from various peptides. This chain is Cytosol aminopeptidase (pepA), found in Helicobacter pylori (strain ATCC 700392 / 26695) (Campylobacter pylori).